A 362-amino-acid chain; its full sequence is MMKRNILAVIVPALLVAGTANAAEIYNKDGNKVDLYGKAVGLHYFSKGNGENSYGGNGDMTYARLGFKGETQINSDLTGYGQWEYNFQGNNSEGADAQTGNKTRLAFAGLKYADVGSFDYGRNYGVVYDALGYTDMLPEFGGDTAYSDDFFVGRVGGVATYRNSNFFGLVDGLNFAVQYLGKNERDTARRSNGDGVGGSISYEYEGFGIVGAYGAADRTNLQEESSLGKGKKAEQWATGLKYDANNIYLAANYGETRNATPITNKFTNTSGFANKTQDVLLVAQYQFDFGLRPSIAYTKSKAKDVEGIGDVDLVNYFEVGATYYFNKNMSTYVDYIINQIDSDNKLGVGSDDTVAVGIVYQF.

The first 22 residues, 1-22 (MMKRNILAVIVPALLVAGTANA), serve as a signal peptide directing secretion.

This sequence belongs to the Gram-negative porin family. As to quaternary structure, homotrimer. Forms mixed heterotrimers with OmpC; other mixed heterotrimers are also probable.

Its subcellular location is the cell outer membrane. Functionally, forms pores that allow passive diffusion of small molecules across the outer membrane. (Microbial infection) Is the major receptor for colicin E5. Its function is as follows. (Microbial infection) A mixed OmpC-OmpF heterotrimer is the outer membrane receptor for toxin CdiA-EC536. In Escherichia coli O6:K15:H31 (strain 536 / UPEC), this protein is Outer membrane porin F (ompF).